The primary structure comprises 268 residues: Tryptophan synthase alpha chain (268 aa).

Residues Glu-49 and Asp-60 each act as proton acceptor in the active site.

It belongs to the TrpA family. As to quaternary structure, tetramer of two alpha and two beta chains.

It catalyses the reaction (1S,2R)-1-C-(indol-3-yl)glycerol 3-phosphate + L-serine = D-glyceraldehyde 3-phosphate + L-tryptophan + H2O. It functions in the pathway amino-acid biosynthesis; L-tryptophan biosynthesis; L-tryptophan from chorismate: step 5/5. Functionally, the alpha subunit is responsible for the aldol cleavage of indoleglycerol phosphate to indole and glyceraldehyde 3-phosphate. This is Tryptophan synthase alpha chain from Xanthomonas oryzae pv. oryzae (strain PXO99A).